The chain runs to 245 residues: 8-amino-3,8-dideoxy-manno-octulosonate cytidylyltransferase (245 aa).

Belongs to the KdsB family.

Its subcellular location is the cytoplasm. It catalyses the reaction 8-amino-3,8-dideoxy-alpha-D-manno-octulosonate + CTP = CMP-8-amino-3,8-dideoxy-alpha-D-manno-oct-2-ulosonate + diphosphate. It participates in bacterial outer membrane biogenesis; lipopolysaccharide biosynthesis. Its function is as follows. Activates KDO8N (a required 8-carbon sugar) for incorporation into bacterial lipopolysaccharide in the Shewanella genus. This chain is 8-amino-3,8-dideoxy-manno-octulosonate cytidylyltransferase, found in Shewanella sediminis (strain HAW-EB3).